A 200-amino-acid chain; its full sequence is Neutrophil gelatinase-associated lipocalin (200 aa).

The first 20 residues, 1-20, serve as a signal peptide directing secretion; it reads MALSVMCLGLALLGVLQSQA. Gln-21 carries the post-translational modification Pyrrolidone carboxylic acid. Position 72–74 (72–74) interacts with a carboxymycobactin; sequence YST. Asn-81 and Asn-85 each carry an N-linked (GlcNAc...) asparagine glycan. An intrachain disulfide couples Cys-98 to Cys-197. Residue Tyr-128 coordinates enterobactin. 3 residues coordinate a carboxymycobactin: Lys-147, Lys-156, and Tyr-160. Lys-156 contacts enterobactin.

It belongs to the calycin superfamily. Lipocalin family. In terms of assembly, monomer. Homodimer; disulfide-linked. Heterodimer; disulfide-linked with MMP9. N-glycosylated. In terms of tissue distribution, expressed in the cortical tubules of the kidney (at protein level). Also expressed in the medullary tubules of the kidney. Detected in lung, spleen, uterus, vagina and epididymis.

The protein localises to the secreted. Its subcellular location is the cytoplasmic granule lumen. It is found in the cytoplasmic vesicle lumen. In terms of biological role, iron-trafficking protein involved in multiple processes such as apoptosis, innate immunity and renal development. Binds iron through association with 2,3-dihydroxybenzoic acid (2,3-DHBA), a siderophore that shares structural similarities with bacterial enterobactin, and delivers or removes iron from the cell, depending on the context. Iron-bound form (holo-24p3) is internalized following binding to the SLC22A17 (24p3R) receptor, leading to release of iron and subsequent increase of intracellular iron concentration. In contrast, association of the iron-free form (apo-24p3) with the SLC22A17 (24p3R) receptor is followed by association with an intracellular siderophore, iron chelation and iron transfer to the extracellular medium, thereby reducing intracellular iron concentration. Involved in apoptosis due to interleukin-3 (IL3) deprivation: iron-loaded form increases intracellular iron concentration without promoting apoptosis, while iron-free form decreases intracellular iron levels, inducing expression of the proapoptotic protein BCL2L11/BIM, resulting in apoptosis. Involved in innate immunity; limits bacterial proliferation by sequestering iron bound to microbial siderophores, such as enterobactin. Can also bind siderophores from M.tuberculosis. The protein is Neutrophil gelatinase-associated lipocalin (Lcn2) of Mus musculus (Mouse).